The following is an 87-amino-acid chain: Small ribosomal subunit protein uS17 (87 aa).

This sequence belongs to the universal ribosomal protein uS17 family. In terms of assembly, part of the 30S ribosomal subunit.

Functionally, one of the primary rRNA binding proteins, it binds specifically to the 5'-end of 16S ribosomal RNA. The chain is Small ribosomal subunit protein uS17 from Bacillus mycoides (strain KBAB4) (Bacillus weihenstephanensis).